Reading from the N-terminus, the 72-residue chain is Subtilisin-chymotrypsin inhibitor-2B (72 aa).

Belongs to the protease inhibitor I13 (potato type I serine protease inhibitor) family.

Functionally, inhibits both subtilisin and chymotrypsin. In Hordeum vulgare (Barley), this protein is Subtilisin-chymotrypsin inhibitor-2B.